The sequence spans 427 residues: Serine hydroxymethyltransferase (427 aa).

(6S)-5,6,7,8-tetrahydrofolate-binding positions include L118 and 122–124 (GHL). The residue at position 227 (K227) is an N6-(pyridoxal phosphate)lysine. Residues E243 and 351 to 353 (SPF) each bind (6S)-5,6,7,8-tetrahydrofolate.

This sequence belongs to the SHMT family. In terms of assembly, homodimer. The cofactor is pyridoxal 5'-phosphate.

It is found in the cytoplasm. It carries out the reaction (6R)-5,10-methylene-5,6,7,8-tetrahydrofolate + glycine + H2O = (6S)-5,6,7,8-tetrahydrofolate + L-serine. Its pathway is one-carbon metabolism; tetrahydrofolate interconversion. It participates in amino-acid biosynthesis; glycine biosynthesis; glycine from L-serine: step 1/1. Catalyzes the reversible interconversion of serine and glycine with tetrahydrofolate (THF) serving as the one-carbon carrier. This reaction serves as the major source of one-carbon groups required for the biosynthesis of purines, thymidylate, methionine, and other important biomolecules. Also exhibits THF-independent aldolase activity toward beta-hydroxyamino acids, producing glycine and aldehydes, via a retro-aldol mechanism. The polypeptide is Serine hydroxymethyltransferase (Thermotoga maritima (strain ATCC 43589 / DSM 3109 / JCM 10099 / NBRC 100826 / MSB8)).